Here is a 435-residue protein sequence, read N- to C-terminus: Xylose isomerase (435 aa).

Active-site residues include H100 and D103. Mg(2+) is bound by residues E231, E267, H270, D295, D306, D308, and D338.

It belongs to the xylose isomerase family. Homotetramer. Requires Mg(2+) as cofactor.

It is found in the cytoplasm. It carries out the reaction alpha-D-xylose = alpha-D-xylulofuranose. The chain is Xylose isomerase from Brucella canis (strain ATCC 23365 / NCTC 10854 / RM-666).